Consider the following 424-residue polypeptide: Deoxyguanosinetriphosphate triphosphohydrolase-like protein (424 aa).

Residues Met1–Val27 are disordered. Basic and acidic residues predominate over residues Asp8–Lys18. One can recognise an HD domain in the interval Arg67–Ser217.

It belongs to the dGTPase family. Type 2 subfamily.

The protein is Deoxyguanosinetriphosphate triphosphohydrolase-like protein (dgt) of Corynebacterium glutamicum (strain ATCC 13032 / DSM 20300 / JCM 1318 / BCRC 11384 / CCUG 27702 / LMG 3730 / NBRC 12168 / NCIMB 10025 / NRRL B-2784 / 534).